We begin with the raw amino-acid sequence, 398 residues long: Acetyl-CoA acetyltransferase (398 aa).

Ser-2 is subject to N-acetylserine. Cys-91 functions as the Acyl-thioester intermediate in the catalytic mechanism. CoA is bound by residues Tyr-186 and Lys-231. Tyr-186 lines the K(+) pocket. 3 residues coordinate K(+): Ala-248, Ala-249, and Ala-251. Position 252 (Ser-252) interacts with CoA. Val-350 contacts K(+). Residues His-354 and Cys-384 each act as proton acceptor in the active site.

This sequence belongs to the thiolase-like superfamily. Thiolase family. In terms of assembly, homotetramer.

Its subcellular location is the cytoplasm. It is found in the cytosol. The enzyme catalyses 2 acetyl-CoA = acetoacetyl-CoA + CoA. The protein operates within metabolic intermediate biosynthesis; (R)-mevalonate biosynthesis; (R)-mevalonate from acetyl-CoA: step 1/3. Functionally, acetyl-CoA acetyltransferase; part of the first module of ergosterol biosynthesis pathway that includes the early steps of the pathway, conserved across all eukaryotes, and which results in the formation of mevalonate from acetyl-coenzyme A (acetyl-CoA). ERG10 catalyzes the formation of acetoacetyl-CoA from acetyl-CoA. The first module starts with the action of the cytosolic acetyl-CoA acetyltransferase ERG10 that catalyzes the formation of acetoacetyl-CoA. The hydroxymethylglutaryl-CoA synthase ERG13 then condenses acetyl-CoA with acetoacetyl-CoA to form HMG-CoA. The rate-limiting step of the early module is the reduction to mevalonate by the 3-hydroxy-3-methylglutaryl-coenzyme A (HMG-CoA) reductases HMG1 and HMG2 which are derived from a single ancestral HMGR gene by gene duplication. The polypeptide is Acetyl-CoA acetyltransferase (Saccharomyces cerevisiae (strain ATCC 204508 / S288c) (Baker's yeast)).